The following is a 162-amino-acid chain: Peptide methionine sulfoxide reductase MsrA (162 aa).

Residue Cys-10 is part of the active site.

The protein belongs to the MsrA Met sulfoxide reductase family.

It catalyses the reaction L-methionyl-[protein] + [thioredoxin]-disulfide + H2O = L-methionyl-(S)-S-oxide-[protein] + [thioredoxin]-dithiol. It carries out the reaction [thioredoxin]-disulfide + L-methionine + H2O = L-methionine (S)-S-oxide + [thioredoxin]-dithiol. Has an important function as a repair enzyme for proteins that have been inactivated by oxidation. Catalyzes the reversible oxidation-reduction of methionine sulfoxide in proteins to methionine. The sequence is that of Peptide methionine sulfoxide reductase MsrA from Clostridium acetobutylicum (strain ATCC 824 / DSM 792 / JCM 1419 / IAM 19013 / LMG 5710 / NBRC 13948 / NRRL B-527 / VKM B-1787 / 2291 / W).